Here is a 552-residue protein sequence, read N- to C-terminus: Putative transport protein HAPS_0158 (552 aa).

5 helical membrane-spanning segments follow: residues 4–24 (IALT…IGHI), 28–48 (GVSL…HFMT), 65–85 (FGLI…FFAS), 95–115 (AFAV…HKIF), and 157–177 (MGYA…MWLI). RCK C-terminal domains are found at residues 193-275 (DSAT…ILGE) and 277-360 (VNVS…IIGN). The next 6 membrane-spanning stretches (helical) occupy residues 370–390 (MLPI…PIYL), 393–413 (FPVA…LILA), 438–458 (IVLF…NTLL), 463–483 (LAWI…TGLV), 492–512 (YLSL…LAFA), and 532–552 (LVMF…WVAG).

The protein belongs to the AAE transporter (TC 2.A.81) family. YidE subfamily.

It is found in the cell membrane. The chain is Putative transport protein HAPS_0158 from Glaesserella parasuis serovar 5 (strain SH0165) (Haemophilus parasuis).